Consider the following 1194-residue polypeptide: Pre-mRNA-processing ATP-dependent RNA helicase prp-5 (1194 aa).

3 disordered regions span residues 1–201 (MARL…KEAK), 224–248 (AVVG…ASPA), and 452–484 (ASGE…DDYG). Basic and acidic residues-rich tracts occupy residues 21–37 (RKDD…GPVD) and 44–154 (SPID…RDQP). Residues 156-176 (PGNTTAKENEPAKSTPTQPQT) are compositionally biased toward polar residues. Basic and acidic residues predominate over residues 177–186 (EAEKKAERLR). Over residues 232–248 (SPAPASPAAAESPASPA) the composition is skewed to low complexity. Residues 455–469 (EESHSKADTLTEKKN) are compositionally biased toward basic and acidic residues. The short motif at 561 to 589 (QKWSQCGLTRPILDTIESLGFEKPTPIQM) is the Q motif element. One can recognise a Helicase ATP-binding domain in the interval 592–770 (LPVIMSGRDV…KKVLRDPVEI (179 aa)). 605-612 (AKTGSGKT) is an ATP binding site. The short motif at 718 to 721 (DEAD) is the DEAD box element. Residues 797–945 (RLLELLGELY…PVPDRLNEMR (149 aa)) form the Helicase C-terminal domain. Disordered stretches follow at residues 952-1011 (VKAG…DKTK) and 1025-1056 (DASK…SGGA). 3 stretches are compositionally biased toward basic and acidic residues: residues 967–980 (GLEK…AARM), 997–1011 (EDAP…DKTK), and 1025–1036 (DASKAETEDKHA).

This sequence belongs to the DEAD box helicase family. DDX46/PRP5 subfamily.

Its subcellular location is the nucleus. The enzyme catalyses ATP + H2O = ADP + phosphate + H(+). In terms of biological role, ATP-dependent RNA helicase involved spliceosome assembly and in nuclear splicing. Catalyzes an ATP-dependent conformational change of U2 snRNP. Bridges U1 and U2 snRNPs and enables stable U2 snRNP association with intron RNA. In Neurospora crassa (strain ATCC 24698 / 74-OR23-1A / CBS 708.71 / DSM 1257 / FGSC 987), this protein is Pre-mRNA-processing ATP-dependent RNA helicase prp-5 (prp-5).